Consider the following 223-residue polypeptide: N-acetylmuramate alpha-1-phosphate uridylyltransferase (223 aa).

UTP is bound by residues 11-13 (GER) and lysine 23. Asparagine 105 lines the substrate pocket. Aspartate 107 is a Mg(2+) binding site. Residues aspartate 140 and aspartate 205 each coordinate substrate. A Mg(2+)-binding site is contributed by aspartate 205.

The protein belongs to the nucleotidyltransferase MurU family. Monomer. Mg(2+) serves as cofactor.

It catalyses the reaction N-acetyl-alpha-D-muramate 1-phosphate + UDP + H(+) = UDP-N-acetyl-alpha-D-muramate + phosphate. Its pathway is cell wall biogenesis; peptidoglycan recycling. Its activity is regulated as follows. Is completely inhibited by EDTA in vitro. In terms of biological role, catalyzes the formation of UDP-N-acetylmuramate (UDP-MurNAc), a crucial precursor of the bacterial peptidoglycan cell wall, from UTP and MurNAc-alpha-1P. Is involved in peptidoglycan recycling as part of a cell wall recycling pathway that bypasses de novo biosynthesis of the peptidoglycan precursor UDP-MurNAc. Plays a role in intrinsic resistance to fosfomycin, which targets the de novo synthesis of UDP-MurNAc. Is not able to use GlcNAc-alpha-1P and GalNAc-alpha-1P as substrates. Cannot accept other nucleotide triphosphates (ATP, CTP, TTP, or GTP) than UTP. This is N-acetylmuramate alpha-1-phosphate uridylyltransferase from Pseudomonas putida (strain ATCC 47054 / DSM 6125 / CFBP 8728 / NCIMB 11950 / KT2440).